The sequence spans 199 residues: Ribonuclease HII (199 aa).

One can recognise an RNase H type-2 domain in the interval 12 to 199 (DLLAGTDEAG…FGPVKKILEG (188 aa)). D18, E19, and D110 together coordinate a divalent metal cation.

This sequence belongs to the RNase HII family. Mn(2+) is required as a cofactor. Requires Mg(2+) as cofactor.

The protein resides in the cytoplasm. The enzyme catalyses Endonucleolytic cleavage to 5'-phosphomonoester.. Its function is as follows. Endonuclease that specifically degrades the RNA of RNA-DNA hybrids. The sequence is that of Ribonuclease HII from Marinomonas sp. (strain MWYL1).